Here is a 204-residue protein sequence, read N- to C-terminus: FMN-dependent NADH:quinone oxidoreductase 1 (204 aa).

FMN is bound by residues S14, S20 to S22, and M99 to F102.

It belongs to the azoreductase type 1 family. In terms of assembly, homodimer. FMN is required as a cofactor.

The catalysed reaction is 2 a quinone + NADH + H(+) = 2 a 1,4-benzosemiquinone + NAD(+). It catalyses the reaction N,N-dimethyl-1,4-phenylenediamine + anthranilate + 2 NAD(+) = 2-(4-dimethylaminophenyl)diazenylbenzoate + 2 NADH + 2 H(+). In terms of biological role, quinone reductase that provides resistance to thiol-specific stress caused by electrophilic quinones. Also exhibits azoreductase activity. Catalyzes the reductive cleavage of the azo bond in aromatic azo compounds to the corresponding amines. The polypeptide is FMN-dependent NADH:quinone oxidoreductase 1 (Hahella chejuensis (strain KCTC 2396)).